Here is a 774-residue protein sequence, read N- to C-terminus: 1,4-alpha-glucan branching enzyme GlgB 1 (774 aa).

The disordered stretch occupies residues 1-66 (MTPRPSSSGP…AEVAVSPAPD (66 aa)). Residues 29-40 (KPAKAAKKKAPR) are compositionally biased toward basic residues. Residues 41-55 (RTTASANASATTSVS) show a composition bias toward low complexity. Aspartate 457 serves as the catalytic Nucleophile. Glutamate 510 serves as the catalytic Proton donor. The disordered stretch occupies residues 748–774 (YGGGDVVNPDPVKPEPQGGTAARRASG).

The protein belongs to the glycosyl hydrolase 13 family. GlgB subfamily. As to quaternary structure, monomer.

The enzyme catalyses Transfers a segment of a (1-&gt;4)-alpha-D-glucan chain to a primary hydroxy group in a similar glucan chain.. Its pathway is glycan biosynthesis; glycogen biosynthesis. Its function is as follows. Catalyzes the formation of the alpha-1,6-glucosidic linkages in glycogen by scission of a 1,4-alpha-linked oligosaccharide from growing alpha-1,4-glucan chains and the subsequent attachment of the oligosaccharide to the alpha-1,6 position. The chain is 1,4-alpha-glucan branching enzyme GlgB 1 (glgB1) from Streptomyces coelicolor (strain ATCC BAA-471 / A3(2) / M145).